Reading from the N-terminus, the 118-residue chain is Mitochondrial import inner membrane translocase subunit Tim10 B (118 aa).

The Twin CX3C motif signature appears at 31–55 (CFQRCVPSLHHRALDAEEEACLHSC). Intrachain disulfides connect Cys-31–Cys-55 and Cys-35–Cys-51. The interval 89 to 118 (SAVPHATAEQLETSPSRSLPSGNLGKGGAG) is disordered. A compositionally biased stretch (polar residues) spans 98-109 (QLETSPSRSLPS).

It belongs to the small Tim family. As to quaternary structure, component of the TIM22 complex, which core is composed of TIMM22, associated with TIMM10 (TIMM10A and/or TIMM10B), TIMM9, AGK and TIMM29.

The protein resides in the mitochondrion inner membrane. Its function is as follows. Component of the TIM22 complex, a complex that mediates the import and insertion of multi-pass transmembrane proteins into the mitochondrial inner membrane. The TIM22 complex forms a twin-pore translocase that uses the membrane potential as the external driving force. In the TIM22 complex, it may act as a docking point for the soluble 70 kDa complex that guides the target proteins in transit through the aqueous mitochondrial intermembrane space. The protein is Mitochondrial import inner membrane translocase subunit Tim10 B (TIMM10B) of Bos taurus (Bovine).